The sequence spans 1043 residues: MEFDRRKAAALAALASPAPDKSPKGGVDAPIAPLLDALNSHPDLFTTSSCSGRVSVLAQPPPPQQADPGGAKTKKKARGGGWVYISHDPADPEALVEVLFGVKEGGGGGDDELVFRFEPMIVAVECRDAAAAAALVAAAVGAGFRESGITSLQKRVMVALRCSIRMEVPLGQTKELVVSPDYIRYLVRIANSKMEANKKRMGGFLDLLQAKISLEASYLESQDPVLQNGAKHGFGNAKRHVLISLSFYPAFISPHGVILTQEEALPTLSGNTTHCLSTAALEITGEPIEKLFLWGQSACALTVGREHHILTFGGFGGPGRHARRNYSLLVNPGSGLLTELKVTGSPSPRMGHTITVVGNDIYVVGGRSGPSEILNDIWVLERSNNRWSKVDCSGDFFRPRHRHAAAAVDRKVYVFGGLSDDGLCSCMNIMDTASIQWNVISPDDKWPCARHSHSLVSYGSKLFLFGGHDGQRALNDFYSFDTTTLKWNKENTNGKAPSPRFSHCMFIYKDYLGILGGCPIRESSQEIALLNLKHKIWFYVSIPSLSQCLCVRSSSVIIDDDLVIVGGGASCYAFGTRFSQPIKIDLHLLESIFKLAYNKEKEMSVQHGSVSNVDLLEGHEENCNPSDNVKVVIDTATLGSSPLVLQLEKKYAKLAKDILKKFGWLDLTRKVRVSQDNIHVLFPVSKTFHALITDKHLKVQPDDSCVFEELLPFSENKLFGASISLQKALEILLLCRGSILKDEVAISRKASKTPQTIMRELVSVLLDKKGLPSQLLEQLPTRWETLGDIIVLPKTCFKDPLWESVRDDLWPLVAKSLGAQRLARQGKITPNGTRDSTLELLVGNDGWLTHHENGICYSLDATKCMFSSGNRSEKLRMGKLDCRDEVVVDLFAGIGYFVLPFLVKANAKLVYACEWNPHALEALQRNVMDNHVADRCIILEGDNRLTAPKGIADRVCLGLLPSSECSWDTAVRALRAEGGMLHIHGNVNDSDESLWLDNVVKSITNIAKTHGLSWNVTVEHVERVKWYGPHIRHLVVDVKCRAT.

A tRNA wybutosine-synthesizing protein 3 homolog region spans residues 1–233; it reads MEFDRRKAAA…PVLQNGAKHG (233 aa). Residues 53-75 are disordered; it reads RVSVLAQPPPPQQADPGGAKTKK. 4 Kelch repeats span residues 360-410, 412-460, 461-510, and 512-559; these read DIYV…AVDR, VYVF…SYGS, KLFL…IYKD, and LGIL…VIID. A tRNA wybutosine-synthesizing protein 2 homolog region spans residues 700–1041; it reads QPDDSCVFEE…RHLVVDVKCR (342 aa). S-adenosyl-L-methionine is bound by residues lysine 874 and 942 to 943; that span reads DN.

It in the C-terminal section; belongs to the class I-like SAM-binding methyltransferase superfamily. TRM5/TYW2 family. In the N-terminal section; belongs to the TYW3 family.

The catalysed reaction is 4-demethyl-7-[(3S)-3-amino-3-carboxypropyl]wyosine(37) in tRNA(Phe) + S-adenosyl-L-methionine = 7-[(3S)-3-amino-3-carboxypropyl]wyosine(37) in tRNA(Phe) + S-adenosyl-L-homocysteine + H(+). It carries out the reaction 4-demethylwyosine(37) in tRNA(Phe) + S-adenosyl-L-methionine = 4-demethyl-7-[(3S)-3-amino-3-carboxypropyl]wyosine(37) in tRNA(Phe) + S-methyl-5'-thioadenosine + H(+). The protein operates within tRNA modification; wybutosine-tRNA(Phe) biosynthesis. Functionally, S-adenosyl-L-methionine-dependent transferase that acts as a component of the wybutosine biosynthesis pathway. Wybutosine is a hyper modified guanosine with a tricyclic base found at the 3'-position adjacent to the anticodon of eukaryotic phenylalanine tRNA. This Oryza sativa subsp. japonica (Rice) protein is tRNA wybutosine-synthesizing protein 2/3/4.